The primary structure comprises 175 residues: MNNLDISFNDEVNFLKNDDKDWIPWITNLLLSAKKEINKKNAQEMSINFVSSEKIHEINKKYRGKDRPTDVISFAIEDGLDEDFMAAFNDDPDFVEDIGDLFLCPEVIKRHSVEYETGFNREFGYTLVHGYLHLNGFDHIEDDEAKVMFGIQGKVLREYGLPLHPDQENHGKQIH.

Positions 129, 133, and 139 each coordinate Zn(2+).

Belongs to the endoribonuclease YbeY family. The cofactor is Zn(2+).

Its subcellular location is the cytoplasm. In terms of biological role, single strand-specific metallo-endoribonuclease involved in late-stage 70S ribosome quality control and in maturation of the 3' terminus of the 16S rRNA. The chain is Endoribonuclease YbeY from Lactobacillus gasseri (strain ATCC 33323 / DSM 20243 / BCRC 14619 / CIP 102991 / JCM 1131 / KCTC 3163 / NCIMB 11718 / NCTC 13722 / AM63).